Consider the following 112-residue polypeptide: Small ribosomal subunit protein bS6 (112 aa).

The protein belongs to the bacterial ribosomal protein bS6 family.

Its function is as follows. Binds together with bS18 to 16S ribosomal RNA. The sequence is that of Small ribosomal subunit protein bS6 from Chlamydia caviae (strain ATCC VR-813 / DSM 19441 / 03DC25 / GPIC) (Chlamydophila caviae).